The sequence spans 331 residues: 6-phosphogluconolactonase (331 aa).

K287 bears the N6-acetyllysine mark.

It belongs to the cycloisomerase 2 family.

It catalyses the reaction 6-phospho-D-glucono-1,5-lactone + H2O = 6-phospho-D-gluconate + H(+). It functions in the pathway carbohydrate degradation; pentose phosphate pathway; D-ribulose 5-phosphate from D-glucose 6-phosphate (oxidative stage): step 2/3. Functionally, catalyzes the hydrolysis of 6-phosphogluconolactone to 6-phosphogluconate. The chain is 6-phosphogluconolactonase from Escherichia coli O6:K15:H31 (strain 536 / UPEC).